A 550-amino-acid polypeptide reads, in one-letter code: MVPPLDLGSLVDSDEEDNFSQTARGTVHVHLNPPRSEPALGWVLPCQRPNSQHRLQEVEQDVIPEDLPAPTGKYRLKYQQYASEMKDGYKQYIQRSTEKPKAASRPEATEKVEGASLDDLMTLDRKALLQQGYADSPYGRQSITRKSDVETVAIEKKKQTVAEQMMMDHLSRAVISDPEQDLNTKNQESSRVPPDSERAPLRVRRRTLHETKIRTNSALTENDLSQKVEFDGRVLSRNGRDACRELIGFFFAHDQSLTVYEYRMFGKNRTSVLPFIKKDIYHHQCGRRKGKQYELGDVYTGATLTFLSCDQPSLPKTIKENALLRLRITNIDQVALNSLKAASAEHGEEEAVSPEAHDQLVLQAIQDKLKEQLHKKGARILTGLGRYFQGLDKEGNGLLEKADFQQALKTFHLEVSEQDFESFWLILQGYGHSKNKVDYGEFKRAIFGEMNEYRKSFVRKAFMQLDFNKTGIVSVIDIRKCYCAKKHPRVISGHSTEEEIKSSFLETLKGTCSKCDEVSYGEFEDYYEGLSIGVAGDEDFVNILRIPWRI.

Disordered stretches follow at residues 1 to 20 and 175 to 198; these read MVPPLDLGSLVDSDEEDNFS and ISDPEQDLNTKNQESSRVPPDSER. Positions 181 to 190 are enriched in polar residues; sequence DLNTKNQESS. 3 consecutive EF-hand domains span residues 379–414, 415–452, and 453–488; these read RILTGLGRYFQGLDKEGNGLLEKADFQQALKTFHLE, VSEQDFESFWLILQGYGHSKNKVDYGEFKRAIFGEMNE, and YRKSFVRKAFMQLDFNKTGIVSVIDIRKCYCAKKHP. Ca(2+) contacts are provided by Asp466, Asn468, Thr470, and Asp477.

In Mus musculus (Mouse), this protein is Calcyphosin-2 (Caps2).